The following is a 182-amino-acid chain: Phospholipase A2 inhibitor gamma subunit A2 (182 aa).

Disulfide bonds link Cys3/Cys27, Cys6/Cys13, Cys20/Cys48, Cys54/Cys75, Cys76/Cys81, Cys99/Cys124, Cys117/Cys146, and Cys150/Cys172. Asn157 carries N-linked (GlcNAc...) asparagine glycosylation.

Belongs to the CNF-like-inhibitor family. As to quaternary structure, heterodimer of subunit A and subunit B.

The protein localises to the secreted. In terms of biological role, phospholipase A2 (PA2) inhibitor. Inhibits the enzymatic activity of PA2 of Deinagkistrodon acutus. Also shows a wide anti-hemorrhage activities to D.acutus, Naja atra and Agkistrodon halys venom. The native protein is more potent than the recombinant one. In Trimerodytes annularis (Red-bellied annulate keelback), this protein is Phospholipase A2 inhibitor gamma subunit A2.